Reading from the N-terminus, the 67-residue chain is MGEISITKLLVVAALVVLLFGTKKLRTLGGDLGAAIKGFKKAMNDDDAAAKKSAEDTVPAEKLSHKE.

A helical transmembrane segment spans residues 4–21 (ISITKLLVVAALVVLLFG).

This sequence belongs to the TatA/E family. TatE subfamily.

The protein localises to the cell inner membrane. Part of the twin-arginine translocation (Tat) system that transports large folded proteins containing a characteristic twin-arginine motif in their signal peptide across membranes. TatE shares overlapping functions with TatA. This Enterobacter cloacae subsp. cloacae (strain ATCC 13047 / DSM 30054 / NBRC 13535 / NCTC 10005 / WDCM 00083 / NCDC 279-56) protein is Probable Sec-independent protein translocase protein TatE.